A 284-amino-acid chain; its full sequence is MKKIAWSLGILVTIGALCAIVWPSWYPSRPLVTTPSQADIQADQSSPRDLLEYFLSGLGETSLPVIQQQVQRYEQENQGLLIDSSLFAQYVQYKAALSELTLPQASGGLSTQEWWQLHQSLLDLQARYFSAEQQALFAEENRLRELAIEKRRIYEQYGQSEEAQRAWQALLLDQPDFIQRSEATAQLLPQLTQAGQGDTQQRYLARVALVGEQGAQRLAELDDSRATFEQQFQDYYQARAAILVRNELSASEQQTQIQQLREQHFAPEQWRRIDALERLKDNGE.

A helical transmembrane segment spans residues 4–24; that stretch reads IAWSLGILVTIGALCAIVWPS.

The protein belongs to the lipase chaperone family.

It localises to the cell inner membrane. Functionally, may be involved in the folding of the extracellular lipase during its passage through the periplasm. This Vibrio cholerae serotype O1 (strain ATCC 39315 / El Tor Inaba N16961) protein is Lipase chaperone (lifO).